The chain runs to 44 residues: AQKCGEQGRGAKCPNCLCCGRYGFCGSTPDYCGVGCQSQCRGCR.

In terms of domain architecture, Chitin-binding type-1 spans 1 to 42; it reads AQKCGEQGRGAKCPNCLCCGRYGFCGSTPDYCGVGCQSQCRG. Cystine bridges form between Cys4–Cys19, Cys13–Cys25, Cys16–Cys43, Cys18–Cys32, and Cys36–Cys40.

In terms of processing, contains 5 disulfide bonds.

Its function is as follows. Binds chitin. Has antifungal activity against F.oxysporum 16/10 (IC(50)=4.1 uM) and B.sorokiniana 6/10 (IC(50)=2.7 uM). Inhibits germination of fungal spores. In Leymus arenarius (Lyme grass), this protein is Antimicrobial peptide 1b.